A 415-amino-acid polypeptide reads, in one-letter code: Protein ROH1A (415 aa).

The interval 184–219 (VSGGGGGGGGGNKTTERSWSFGRRSGGSSAASKGGA) is disordered. Gly residues predominate over residues 185–195 (SGGGGGGGGGN). Residues 200-219 (RSWSFGRRSGGSSAASKGGA) show a composition bias toward low complexity. A helical membrane pass occupies residues 263–283 (MFIMSTVMVFVMWVLTAAVPC).

Belongs to the ROH1 family. Interacts with EXO70A1 and EXO70C1. Binds to EXO70C2. As to expression, mainly expressed in cells expanding in a polar manner such as pollen and root hairs.

It is found in the membrane. The protein localises to the cytoplasm. The protein resides in the cytosol. Its function is as follows. Required for seed coat mucilage deposition. This Arabidopsis thaliana (Mouse-ear cress) protein is Protein ROH1A.